Consider the following 146-residue polypeptide: Snaclec 1 (146 aa).

An N-terminal signal peptide occupies residues 1–23 (MGRFIFISFGLLVVFLSLSGTEA). Intrachain disulfides connect C25–C36, C53–C142, and C119–C134. In terms of domain architecture, C-type lectin spans 32–143 (YEGHCYRVFD…CRNYGHFVCK (112 aa)).

Belongs to the snaclec family. As to quaternary structure, heterodimer; disulfide-linked. As to expression, expressed by the venom gland.

It is found in the secreted. Functionally, interferes with one step of hemostasis (modulation of platelet aggregation, or coagulation cascade, for example). The protein is Snaclec 1 of Bitis arietans (African puff adder).